Reading from the N-terminus, the 134-residue chain is Large ribosomal subunit protein eL28 (134 aa).

Serine 60 is subject to Phosphoserine.

This sequence belongs to the eukaryotic ribosomal protein eL28 family. Component of the large ribosomal subunit (LSU). Mature yeast ribosomes consist of a small (40S) and a large (60S) subunit. The 40S small subunit contains 1 molecule of ribosomal RNA (18S rRNA) and at least 33 different proteins. The large 60S subunit contains 3 rRNA molecules (25S, 5.8S and 5S rRNA) and at least 46 different proteins.

It localises to the cytoplasm. Its function is as follows. Component of the ribosome, a large ribonucleoprotein complex responsible for the synthesis of proteins in the cell. The small ribosomal subunit (SSU) binds messenger RNAs (mRNAs) and translates the encoded message by selecting cognate aminoacyl-transfer RNA (tRNA) molecules. The large subunit (LSU) contains the ribosomal catalytic site termed the peptidyl transferase center (PTC), which catalyzes the formation of peptide bonds, thereby polymerizing the amino acids delivered by tRNAs into a polypeptide chain. The nascent polypeptides leave the ribosome through a tunnel in the LSU and interact with protein factors that function in enzymatic processing, targeting, and the membrane insertion of nascent chains at the exit of the ribosomal tunnel. The sequence is that of Large ribosomal subunit protein eL28 (rpl44) from Schizosaccharomyces pombe (strain 972 / ATCC 24843) (Fission yeast).